Here is a 555-residue protein sequence, read N- to C-terminus: Tetracycline 7-halogenase (555 aa).

Position 22–27 (22–27 (GSGLSG)) interacts with FAD.

This sequence belongs to the flavin-dependent halogenase family. Bacterial tryptophan halogenase subfamily. In terms of assembly, homodimer.

It catalyses the reaction tetracycline + FADH2 + chloride + O2 = 7-chlorotetracycline + FAD + 2 H2O + H(+). Its pathway is antibiotic biosynthesis. Involved in the biosynthesis of chlorotetracycline (CTC), an important member from antibiotics tetracycline (TC) family, which inhibits protein synthesis in bacteria and is widely involved in clinical therapy, animal feeds and aquaculture. Utilizes FADH(2) supplied by the flavin reductase CtcQ, to catalyze the chlorination of tetracycline (TC) at C7 position, leading to the production of 7-chlorotetracycline. The enzyme forms a lysine chloramine intermediate on an internal lysine residue before transferring the chlorine to the substrate. It is stereo-selective for the 4S (natural) isomer of tetracycline. The protein is Tetracycline 7-halogenase of Kitasatospora aureofaciens (Streptomyces aureofaciens).